We begin with the raw amino-acid sequence, 1767 residues long: E3 ubiquitin-protein ligase listerin (1767 aa).

7 HEAT repeats span residues 59–96 (SLVDSDFRMVLRKLSKKDVTTKLKAMQEFGIMCTERDT), 100–138 (KGVLPYWPRIFCKISLDHDRRVREATQQAFEKLILKVKK), 273–314 (SAYF…VVCP), 335–372 (NAKKSVFPKLMAMIREGGRGLAAVMYPYLLPFISKLPQ), 380–418 (DFFKNFLTSLVTGLSTERTKSSSSECSAVISAFFECLRF), 433–473 (LINE…KADA), and 509–547 (VKSVLCVSSLVGVLQRPRSSLKLHRKKTAQVRFAINIPE). The interval 550 to 583 (KGDEKSMSSEGENSEGSDGGAQSPLSNTSSDLVS) is disordered. The segment covering 572-581 (SPLSNTSSDL) has biased composition (polar residues). 7 HEAT repeats span residues 621–658 (LDSFSSVQVFNILLSDKQKNVVKAKPLEITKLAEKNPA), 676–714 (EDGGFLVDILYSALRCCDSGVERKEVLDDLTKEDLKWSS), 1067–1104 (SETSSLLQLLFDRSRKNGTLWSLIIAKLILSRSISSDE), 1183–1226 (QLLH…IMRF), 1315–1353 (GIHSLLLPLLVNAIGENKDLSETSFQNAMLKPMCETLTY), 1378–1415 (EHLQTLLNTLTPLLLFRARPVQIAAYHMLCKLMPELPQ), and 1476–1513 (LGYLLTWKLILTFFKAASSQLRALYSMYLRKTKSLNKL). The segment at 1716–1763 (CMICFSVIHGFNYSLPKKACRTCKKKFHSACLYKWFTSSNKSTCPLCR) adopts an RING-type zinc-finger fold.

Belongs to the LTN1 family. In terms of assembly, component of the ribosome quality control complex (RQC), composed of at least the E3 ubiquitin ligase LTN1 and NEMF associated with the 60S ribosomal subunit. The complex probably also contains TCF25 as well as VCP/p97 and its ubiquitin-binding cofactors. Autoubiquitinated. Widely expressed, including in the brain and spinal cord.

It localises to the cytoplasm. Its subcellular location is the cytosol. It carries out the reaction S-ubiquitinyl-[E2 ubiquitin-conjugating enzyme]-L-cysteine + [acceptor protein]-L-lysine = [E2 ubiquitin-conjugating enzyme]-L-cysteine + N(6)-ubiquitinyl-[acceptor protein]-L-lysine.. The protein operates within protein modification; protein ubiquitination. Functionally, E3 ubiquitin-protein ligase. component of the ribosome quality control complex (RQC), a ribosome-associated complex that mediates ubiquitination and extraction of incompletely synthesized nascent chains for proteasomal degradation. Within the RQC complex, LTN1 is recruited to stalled 60S ribosomal subunits by NEMF and mediates ubiquitination of stalled nascent chains. Ubiquitination leads to VCP/p97 recruitment for extraction and degradation of the incomplete translation product. This Mus musculus (Mouse) protein is E3 ubiquitin-protein ligase listerin (Ltn1).